The following is a 201-amino-acid chain: Small ribosomal subunit protein uS4c (201 aa).

Residues 19–38 (PGLTSKSPKAGSDLRNQLRS) are disordered. Residues 89 to 149 (MRLDNILFRL…DEQKSRALIQ (61 aa)) enclose the S4 RNA-binding domain.

The protein belongs to the universal ribosomal protein uS4 family. As to quaternary structure, part of the 30S ribosomal subunit. Contacts protein S5. The interaction surface between S4 and S5 is involved in control of translational fidelity.

It is found in the plastid. The protein localises to the chloroplast. Its function is as follows. One of the primary rRNA binding proteins, it binds directly to 16S rRNA where it nucleates assembly of the body of the 30S subunit. In terms of biological role, with S5 and S12 plays an important role in translational accuracy. The polypeptide is Small ribosomal subunit protein uS4c (rps4) (Platanus occidentalis (Sycamore)).